A 62-amino-acid polypeptide reads, in one-letter code: MAKVCSVCGKGKVSGNQVSHSNKHNKRTWSANLRSVRAIIDGAPKRVKVCTRCLRSGKIERA.

This sequence belongs to the bacterial ribosomal protein bL28 family.

This chain is Large ribosomal subunit protein bL28, found in Clostridioides difficile (strain 630) (Peptoclostridium difficile).